A 488-amino-acid polypeptide reads, in one-letter code: Glutamyl-tRNA(Gln) amidotransferase subunit A (488 aa).

Catalysis depends on charge relay system residues Lys77 and Ser152. Ser176 (acyl-ester intermediate) is an active-site residue.

It belongs to the amidase family. GatA subfamily. In terms of assembly, heterotrimer of A, B and C subunits.

The catalysed reaction is L-glutamyl-tRNA(Gln) + L-glutamine + ATP + H2O = L-glutaminyl-tRNA(Gln) + L-glutamate + ADP + phosphate + H(+). In terms of biological role, allows the formation of correctly charged Gln-tRNA(Gln) through the transamidation of misacylated Glu-tRNA(Gln) in organisms which lack glutaminyl-tRNA synthetase. The reaction takes place in the presence of glutamine and ATP through an activated gamma-phospho-Glu-tRNA(Gln). The polypeptide is Glutamyl-tRNA(Gln) amidotransferase subunit A (Latilactobacillus sakei subsp. sakei (strain 23K) (Lactobacillus sakei subsp. sakei)).